A 362-amino-acid polypeptide reads, in one-letter code: Resuscitation-promoting factor RpfB (362 aa).

The first 22 residues, 1 to 22, serve as a signal peptide directing secretion; it reads MLRGVVGAFLVSLTVAGSYAVA. The G5 domain occupies 192–272; the sequence is VTRMRIEKVT…NGVLRVGAKP (81 aa).

It belongs to the transglycosylase family. Rpf subfamily.

Functionally, factor that stimulates resuscitation of dormant cells. Has peptidoglycan (PG) hydrolytic activity. Active in the pM concentration range. Has little to no effect on actively-growing cells. PG fragments could either directly activate the resuscitation pathway of dormant bacteria or serve as a substrate for endogenous Rpf, resulting in low molecular weight products with resuscitation activity. This Mycolicibacterium smegmatis (strain ATCC 700084 / mc(2)155) (Mycobacterium smegmatis) protein is Resuscitation-promoting factor RpfB (rpfB).